A 481-amino-acid chain; its full sequence is Surface lipoprotein assembly modifier 2 (481 aa).

The signal sequence occupies residues 1–24 (MKNGVKQLFLLSLIGLSLTNVAWA). An N-terminal domain region spans residues 24–192 (AEVARPKNDT…QYLLTLNQRN (169 aa)). The tract at residues 193–481 (QWIWQVGLNF…RIYLEIGKIF (289 aa)) is C-terminal probable beta barrel. 14 consecutive transmembrane segments (beta stranded) span residues 194 to 204 (WIWQVGLNFLN), 223 to 243 (AWEK…KKWP), 248 to 257 (FFSKTMFNGN), 271 to 281 (TVRIGGGLGYQ), 285 to 295 (VEVSLFPFQEK), 315 to 325 (LGIRLENVDWL), 329 to 339 (WQISTALEYGE), 353 to 363 (YFVSSTLFYLP), 368 to 377 (FWFVGMDFHR), 390 to 399 (KTLRLGWGQD), 404 to 414 (ISSRLTFSYAN), 432 to 441 (YTTTITLWHR), 448 to 458 (LTPKLSWDYQK), and 471 to 481 (NRIYLEIGKIF).

This sequence belongs to the Slam family.

Its subcellular location is the cell outer membrane. Required for correct export to the cell surface of some cell outer membrane lipoproteins. In Haemophilus influenzae (strain ATCC 51907 / DSM 11121 / KW20 / Rd), this protein is Surface lipoprotein assembly modifier 2.